A 448-amino-acid chain; its full sequence is Nicotinate phosphoribosyltransferase pncB1 (448 aa).

The tract at residues 1–21 (MGPPPAARRREGEPDNQDPAG) is disordered. Histidine 212 carries the post-translational modification Phosphohistidine. The segment at 353–372 (RSSYKESPGGRKEALRRSRA) is disordered.

It belongs to the NAPRTase family. Transiently phosphorylated on a His residue during the reaction cycle. Phosphorylation strongly increases the affinity for substrates and increases the rate of nicotinate D-ribonucleotide production. Dephosphorylation regenerates the low-affinity form of the enzyme, leading to product release.

It carries out the reaction nicotinate + 5-phospho-alpha-D-ribose 1-diphosphate + ATP + H2O = nicotinate beta-D-ribonucleotide + ADP + phosphate + diphosphate. Its pathway is cofactor biosynthesis; NAD(+) biosynthesis; nicotinate D-ribonucleotide from nicotinate: step 1/1. Involved in the Preiss-Handler pathway, which is a recycling route that permits the salvage of free nicotinamide (NM) and nicotinic acid (Na) involved in the NAD biosynthesis. Catalyzes the synthesis of beta-nicotinate D-ribonucleotide from nicotinate and 5-phospho-D-ribose 1-phosphate at the expense of ATP. It is not able to use nicotinamide. PncB1 contributes to basal NAD level. This is Nicotinate phosphoribosyltransferase pncB1 (pncB1) from Mycobacterium tuberculosis (strain ATCC 25618 / H37Rv).